The following is a 111-amino-acid chain: Large ribosomal subunit protein uL23 (111 aa).

It belongs to the universal ribosomal protein uL23 family. In terms of assembly, part of the 50S ribosomal subunit. Contacts protein L29, and trigger factor when it is bound to the ribosome.

One of the early assembly proteins it binds 23S rRNA. One of the proteins that surrounds the polypeptide exit tunnel on the outside of the ribosome. Forms the main docking site for trigger factor binding to the ribosome. This is Large ribosomal subunit protein uL23 from Chlamydia felis (strain Fe/C-56) (Chlamydophila felis).